We begin with the raw amino-acid sequence, 364 residues long: MEQNTDNVFNFSAGPAALPKPVMQQAQQELLNWQGLGTSVMEISHRSKEFIAVAEQSEQDLRDLLNIPDNYKVLFCQGGARAQFAAVPLNLLGDATTATYIDAGYWAESAVEEAKKYCQPDVFVAKAEKDGKQAVLPASEWQIHPDAAYVHFCPNETIDGIEINDLPVTDKPIVADMSSTILSREIDVSKYGVIYAGAQKNIGPSGIAIAIVRDDLLGLAKEVLPSILNYKVLAEQDSMFNTPPTFAWYLSGLVFKWLKAQGGVKAIEQVNREKAAILYNYIDESDFYINNVHPDNRSLMNVPFQMVKPELDAKFLKEAEALGLKSLKGHRVVGGMRASIYNAMPIEGVKALVDFMRQFEQENA.

Arg-46 serves as a coordination point for L-glutamate. Residues 80–81 (AR), Trp-106, Thr-157, Asp-176, and Gln-199 each bind pyridoxal 5'-phosphate. Lys-200 bears the N6-(pyridoxal phosphate)lysine mark. 241–242 (NT) is a pyridoxal 5'-phosphate binding site.

Belongs to the class-V pyridoxal-phosphate-dependent aminotransferase family. SerC subfamily. In terms of assembly, homodimer. Pyridoxal 5'-phosphate serves as cofactor.

Its subcellular location is the cytoplasm. It carries out the reaction O-phospho-L-serine + 2-oxoglutarate = 3-phosphooxypyruvate + L-glutamate. The catalysed reaction is 4-(phosphooxy)-L-threonine + 2-oxoglutarate = (R)-3-hydroxy-2-oxo-4-phosphooxybutanoate + L-glutamate. Its pathway is amino-acid biosynthesis; L-serine biosynthesis; L-serine from 3-phospho-D-glycerate: step 2/3. The protein operates within cofactor biosynthesis; pyridoxine 5'-phosphate biosynthesis; pyridoxine 5'-phosphate from D-erythrose 4-phosphate: step 3/5. Its function is as follows. Catalyzes the reversible conversion of 3-phosphohydroxypyruvate to phosphoserine and of 3-hydroxy-2-oxo-4-phosphonooxybutanoate to phosphohydroxythreonine. The chain is Phosphoserine aminotransferase from Vibrio vulnificus (strain YJ016).